A 279-amino-acid chain; its full sequence is Alcohol dehydrogenase-related 31 kDa protein (279 aa).

11–34 (YVADCGGIALETSKVLMTKNIAKL) contacts NAD(+). Substrate is bound at residue S139. The active-site Proton acceptor is the Y152.

This sequence belongs to the short-chain dehydrogenases/reductases (SDR) family.

This is Alcohol dehydrogenase-related 31 kDa protein (Adhr) from Drosophila guanche (Fruit fly).